The following is a 293-amino-acid chain: Transcription initiation factor IIB 2 (293 aa).

The TFIIB-type zinc-finger motif lies at Met-1–Glu-31. Positions 3, 6, 23, and 26 each coordinate Zn(2+). 2 consecutive repeat copies span residues Ser-107–Ile-193 and Glu-204–Asp-285.

The protein belongs to the TFIIB family.

Stabilizes TBP binding to an archaeal box-A promoter. Also responsible for recruiting RNA polymerase II to the pre-initiation complex (DNA-TBP-TFIIB). This chain is Transcription initiation factor IIB 2, found in Saccharolobus solfataricus (strain ATCC 35092 / DSM 1617 / JCM 11322 / P2) (Sulfolobus solfataricus).